Consider the following 255-residue polypeptide: Taurine import ATP-binding protein TauB (255 aa).

Residues 2–229 (LNVSGLWAEY…RYAEGEPCRA (228 aa)) form the ABC transporter domain. An ATP-binding site is contributed by 34–41 (GPSGCGKT).

This sequence belongs to the ABC transporter superfamily. Taurine importer (TC 3.A.1.17.1) family. In terms of assembly, the complex is composed of two ATP-binding proteins (TauB), two transmembrane proteins (TauC) and a solute-binding protein (TauA).

The protein resides in the cell inner membrane. It catalyses the reaction taurine(out) + ATP + H2O = taurine(in) + ADP + phosphate + H(+). Its function is as follows. Part of the ABC transporter complex TauABC involved in taurine import. Responsible for energy coupling to the transport system. In Yersinia pestis bv. Antiqua (strain Antiqua), this protein is Taurine import ATP-binding protein TauB.